The primary structure comprises 599 residues: Laccase-15 (599 aa).

An N-terminal signal peptide occupies residues 1-29; it reads MKRCQSSRPTAAVAAVVAAVSMIIVLVSG. Plastocyanin-like domains lie at 46 to 162 and 173 to 328; these read VVSQ…PRHG and REVP…YSSN. N-linked (GlcNAc...) asparagine glycans are attached at residues N51 and N92. Residues H96 and H98 each coordinate Cu cation. An N-linked (GlcNAc...) asparagine glycan is attached at N124. Residues H141 and H143 each contribute to the Cu cation site. N-linked (GlcNAc...) asparagine glycosylation is found at N193, N217, N331, N355, N412, and N454. One can recognise a Plastocyanin-like 3 domain in the interval 444–586; the sequence is ELAERPPRAY…AAVFIVEDGP (143 aa). Cu cation is bound by residues N503, H506, H508, H565, C566, H567, H571, and M576.

It belongs to the multicopper oxidase family. Cu cation is required as a cofactor.

It localises to the secreted. Its subcellular location is the extracellular space. The protein localises to the apoplast. The catalysed reaction is 4 hydroquinone + O2 = 4 benzosemiquinone + 2 H2O. In terms of biological role, lignin degradation and detoxification of lignin-derived products. This chain is Laccase-15 (LAC15), found in Oryza sativa subsp. japonica (Rice).